We begin with the raw amino-acid sequence, 137 residues long: Peptide methionine sulfoxide reductase MsrB (137 aa).

Positions 7–129 constitute a MsrB domain; it reads AEELKKNLSE…NSASLRFTDG (123 aa). Residues Cys-46, Cys-49, Cys-95, and Cys-98 each coordinate Zn(2+). Residue Cys-118 is the Nucleophile of the active site.

Belongs to the MsrB Met sulfoxide reductase family. It depends on Zn(2+) as a cofactor.

The catalysed reaction is L-methionyl-[protein] + [thioredoxin]-disulfide + H2O = L-methionyl-(R)-S-oxide-[protein] + [thioredoxin]-dithiol. This chain is Peptide methionine sulfoxide reductase MsrB, found in Escherichia coli (strain K12 / MC4100 / BW2952).